The primary structure comprises 122 residues: Large ribosomal subunit protein bL12 (122 aa).

Belongs to the bacterial ribosomal protein bL12 family. In terms of assembly, homodimer. Part of the ribosomal stalk of the 50S ribosomal subunit. Forms a multimeric L10(L12)X complex, where L10 forms an elongated spine to which 2 to 4 L12 dimers bind in a sequential fashion. Binds GTP-bound translation factors.

In terms of biological role, forms part of the ribosomal stalk which helps the ribosome interact with GTP-bound translation factors. Is thus essential for accurate translation. In Xylella fastidiosa (strain M23), this protein is Large ribosomal subunit protein bL12.